A 205-amino-acid polypeptide reads, in one-letter code: Large ribosomal subunit protein uL4 (205 aa).

The interval 54–78 is disordered; that stretch reads GDISGTTAKPHRQKHTGRARQGSLR. Positions 62 to 71 are enriched in basic residues; sequence KPHRQKHTGR.

It belongs to the universal ribosomal protein uL4 family. As to quaternary structure, part of the 50S ribosomal subunit.

One of the primary rRNA binding proteins, this protein initially binds near the 5'-end of the 23S rRNA. It is important during the early stages of 50S assembly. It makes multiple contacts with different domains of the 23S rRNA in the assembled 50S subunit and ribosome. In terms of biological role, forms part of the polypeptide exit tunnel. This Ehrlichia chaffeensis (strain ATCC CRL-10679 / Arkansas) protein is Large ribosomal subunit protein uL4.